A 201-amino-acid polypeptide reads, in one-letter code: Probable nicotinate-nucleotide adenylyltransferase (201 aa).

Belongs to the NadD family.

It carries out the reaction nicotinate beta-D-ribonucleotide + ATP + H(+) = deamido-NAD(+) + diphosphate. It participates in cofactor biosynthesis; NAD(+) biosynthesis; deamido-NAD(+) from nicotinate D-ribonucleotide: step 1/1. Catalyzes the reversible adenylation of nicotinate mononucleotide (NaMN) to nicotinic acid adenine dinucleotide (NaAD). This chain is Probable nicotinate-nucleotide adenylyltransferase, found in Clostridium botulinum (strain Langeland / NCTC 10281 / Type F).